The primary structure comprises 147 residues: Hemoglobin subunit beta-1 (147 aa).

Residues 3–147 form the Globin domain; it reads NLTAKERQLI…IADALGKGYH (145 aa). Heme b is bound by residues histidine 64 and histidine 93.

The protein belongs to the globin family. As to quaternary structure, heterotetramer of two alpha chains and two beta chains. In terms of tissue distribution, red blood cells.

Its function is as follows. Involved in oxygen transport from the lung to the various peripheral tissues. This is Hemoglobin subunit beta-1 (hbb1) from Xenopus tropicalis (Western clawed frog).